Here is a 262-residue protein sequence, read N- to C-terminus: 1,2-epoxyphenylacetyl-CoA isomerase (262 aa).

Belongs to the enoyl-CoA hydratase/isomerase family.

It carries out the reaction 2-(1,2-epoxy-1,2-dihydrophenyl)acetyl-CoA = 2-oxepin-2(3H)-ylideneacetyl-CoA. Its pathway is aromatic compound metabolism; phenylacetate degradation. Its function is as follows. Catalyzes the reversible conversion of the epoxide to 2-oxepin-2(3H)-ylideneacetyl-CoA (oxepin-CoA). This is 1,2-epoxyphenylacetyl-CoA isomerase (paaG) from Escherichia coli (strain K12).